We begin with the raw amino-acid sequence, 327 residues long: MTSQSQNIVETPSRVRAHALGINAPELAQYQDEPAQMRSGAVGKSGYLKLRFAKREHRSILAEMERRVPSMVQKALYWDEEMPELPCVTMISTSGCILQGDRLATDVIVEAGACAHVTTQSATKVHMMNANYASQIQNFTVEEGGYLEFMPDPLIPHRNSRFITDTTINIHPTATAIYSEVLMSGRKYHHADERFGFDVYSSRVAAHVFLGKEQPAGKELFVEKYVLEPKSESLDAIGVMQSFDAFGNVILLTPKQHHERILARVPAHFDIKGGIASGATRLPNDCGLVFKALGIDSAGVKNEIRQFWKIAREEILGVTLPEKFLWR.

Belongs to the UreD family. UreD, UreF and UreG form a complex that acts as a GTP-hydrolysis-dependent molecular chaperone, activating the urease apoprotein by helping to assemble the nickel containing metallocenter of UreC. The UreE protein probably delivers the nickel.

The protein localises to the cytoplasm. Its function is as follows. Required for maturation of urease via the functional incorporation of the urease nickel metallocenter. The sequence is that of Urease accessory protein UreD from Yersinia enterocolitica serotype O:8 / biotype 1B (strain NCTC 13174 / 8081).